A 315-amino-acid polypeptide reads, in one-letter code: KH domain-containing protein At5g56140 (315 aa).

2 disordered regions span residues Met1–Arg53 and Ser136–Ser158. Residues Leu7 to Arg28 show a composition bias toward gly residues. Polar residues-rich tracts occupy residues Thr31–Arg53 and Ser136–Ser146. Positions Asp171–Leu238 constitute a KH domain. Residues Arg289–Gly315 are disordered. Residue Ser300 is modified to Phosphoserine.

It localises to the nucleus. The chain is KH domain-containing protein At5g56140 from Arabidopsis thaliana (Mouse-ear cress).